Reading from the N-terminus, the 88-residue chain is Cell division topological specificity factor (88 aa).

This sequence belongs to the MinE family.

Functionally, prevents the cell division inhibition by proteins MinC and MinD at internal division sites while permitting inhibition at polar sites. This ensures cell division at the proper site by restricting the formation of a division septum at the midpoint of the long axis of the cell. The protein is Cell division topological specificity factor of Carboxydothermus hydrogenoformans (strain ATCC BAA-161 / DSM 6008 / Z-2901).